A 540-amino-acid polypeptide reads, in one-letter code: Putative cysteine ligase BshC (540 aa).

The stretch at 425-453 (IEKVEGMIEQQRRLNKDLLDEVAGNQNNI) forms a coiled coil.

It belongs to the BshC family.

Involved in bacillithiol (BSH) biosynthesis. May catalyze the last step of the pathway, the addition of cysteine to glucosamine malate (GlcN-Mal) to generate BSH. The chain is Putative cysteine ligase BshC from Staphylococcus aureus (strain NCTC 8325 / PS 47).